The primary structure comprises 250 residues: MTGSWEARYAAEFFGTLILVLLGNGAVANAFLKNTTGNDDPGLANGGWLLVASGYGLGVMLPAMMFGSISGNHLNPAITIGQAVIGIFPWAHVAPYLIWQFLGAIAGQCLILALYWPHYRQTTDNEAVLGTFATSDHANSQLNGFVTEMVGTAVLIFGAMGLYRGMFFHQNIDIANIGVGLLIAAMVISLGGPTGPALNPARDLGPRLVHALFPVPNKGSSHWEYSWVPVVAPIVGAVIGIWIYKIFFGL.

The next 2 membrane-spanning stretches (helical) occupy residues 12–32 and 46–66; these read EFFG…NAFL and GGWL…AMMF. Positions 75-77 match the NPA 1 motif; the sequence is NPA. A run of 3 helical transmembrane segments spans residues 85-105, 142-162, and 172-192; these read IGIF…LGAI, LNGF…AMGL, and IDIA…SLGG. The short motif at 199–201 is the NPA 2 element; that stretch reads NPA. The chain crosses the membrane as a helical span at residues 230-250; the sequence is VVAPIVGAVIGIWIYKIFFGL.

Belongs to the MIP/aquaporin (TC 1.A.8) family.

The protein resides in the cell membrane. Its function is as follows. Probable transporter that facilitates the transmembrane diffusion of an unknown substrate. Is not permeable to water, dihydroxyacetone, glycerol, urea, H(2)O(2) and D/L-lactic acid. This is Glycerol uptake facilitator protein-like 5 from Lactiplantibacillus plantarum (strain ATCC BAA-793 / NCIMB 8826 / WCFS1) (Lactobacillus plantarum).